A 346-amino-acid chain; its full sequence is Protein farnesyltransferase/geranylgeranyltransferase type-1 subunit alpha (346 aa).

PFTA repeat units follow at residues 59 to 93, 94 to 128, 130 to 164, 165 to 198, and 205 to 239; these read RSTR…ALGV, DLRE…KLGA, AVTN…ALGG, WEDE…RSPL, and MREL…NDTQ.

This sequence belongs to the protein prenyltransferase subunit alpha family. In terms of assembly, heterodimer of an alpha and a beta subunit. Mg(2+) serves as cofactor.

The enzyme catalyses L-cysteinyl-[protein] + (2E,6E)-farnesyl diphosphate = S-(2E,6E)-farnesyl-L-cysteinyl-[protein] + diphosphate. It carries out the reaction geranylgeranyl diphosphate + L-cysteinyl-[protein] = S-geranylgeranyl-L-cysteinyl-[protein] + diphosphate. Its function is as follows. Essential subunit of both the farnesyltransferase and the geranylgeranyltransferase complex. Contributes to the transfer of a farnesyl or geranylgeranyl moiety from farnesyl or geranylgeranyl diphosphate to a cysteine at the fourth position from the C-terminus of several proteins having the C-terminal sequence Cys-aliphatic-aliphatic-X. The chain is Protein farnesyltransferase/geranylgeranyltransferase type-1 subunit alpha (FTA) from Solanum lycopersicum (Tomato).